Consider the following 238-residue polypeptide: Cysteine-rich venom protein 1 (238 aa).

The signal sequence occupies residues M1–G19. One can recognise an SCP domain in the interval V38–Y164. Cystine bridges form between C75-C153, C92-C165, C148-C162, C184-C191, C187-C196, C200-C233, C209-C227, and C218-C231. A ShKT domain is found at C200 to C233.

This sequence belongs to the CRISP family. As to expression, expressed by the venom gland.

Its subcellular location is the secreted. In terms of biological role, blocks contraction of smooth muscle elicited by high potassium-induced depolarization, but does not block caffeine-stimulated contraction. May target voltage-gated calcium channels on smooth muscle. The protein is Cysteine-rich venom protein 1 of Hydrophis hardwickii (Hardwick's spine-bellied seasnake).